The chain runs to 459 residues: tRNA modification GTPase MnmE (459 aa).

(6S)-5-formyl-5,6,7,8-tetrahydrofolate is bound by residues Arg29, Glu91, and Arg130. Positions 225–381 (GVKVAIVGRP…LEEALEQLVT (157 aa)) constitute a TrmE-type G domain. Asn235 provides a ligand contact to K(+). GTP-binding positions include 235 to 240 (NVGKSS), 254 to 260 (TDLPGTT), and 279 to 282 (DTAG). Residue Ser239 participates in Mg(2+) binding. The K(+) site is built by Thr254, Leu256, and Thr259. A Mg(2+)-binding site is contributed by Thr260. A (6S)-5-formyl-5,6,7,8-tetrahydrofolate-binding site is contributed by Lys459.

This sequence belongs to the TRAFAC class TrmE-Era-EngA-EngB-Septin-like GTPase superfamily. TrmE GTPase family. As to quaternary structure, homodimer. Heterotetramer of two MnmE and two MnmG subunits. Requires K(+) as cofactor.

It localises to the cytoplasm. In terms of biological role, exhibits a very high intrinsic GTPase hydrolysis rate. Involved in the addition of a carboxymethylaminomethyl (cmnm) group at the wobble position (U34) of certain tRNAs, forming tRNA-cmnm(5)s(2)U34. The sequence is that of tRNA modification GTPase MnmE from Synechococcus sp. (strain JA-3-3Ab) (Cyanobacteria bacterium Yellowstone A-Prime).